Here is a 243-residue protein sequence, read N- to C-terminus: Pyridoxine 5'-phosphate synthase (243 aa).

Asparagine 9 is a 3-amino-2-oxopropyl phosphate binding site. 11-12 (DH) lines the 1-deoxy-D-xylulose 5-phosphate pocket. Arginine 20 contributes to the 3-amino-2-oxopropyl phosphate binding site. Histidine 45 acts as the Proton acceptor in catalysis. 2 residues coordinate 1-deoxy-D-xylulose 5-phosphate: arginine 47 and histidine 52. Glutamate 72 serves as the catalytic Proton acceptor. Threonine 102 contacts 1-deoxy-D-xylulose 5-phosphate. Histidine 193 serves as the catalytic Proton donor. 3-amino-2-oxopropyl phosphate contacts are provided by residues glycine 194 and 215–216 (GH).

This sequence belongs to the PNP synthase family. Homooctamer; tetramer of dimers.

Its subcellular location is the cytoplasm. It catalyses the reaction 3-amino-2-oxopropyl phosphate + 1-deoxy-D-xylulose 5-phosphate = pyridoxine 5'-phosphate + phosphate + 2 H2O + H(+). Its pathway is cofactor biosynthesis; pyridoxine 5'-phosphate biosynthesis; pyridoxine 5'-phosphate from D-erythrose 4-phosphate: step 5/5. Functionally, catalyzes the complicated ring closure reaction between the two acyclic compounds 1-deoxy-D-xylulose-5-phosphate (DXP) and 3-amino-2-oxopropyl phosphate (1-amino-acetone-3-phosphate or AAP) to form pyridoxine 5'-phosphate (PNP) and inorganic phosphate. The protein is Pyridoxine 5'-phosphate synthase of Yersinia pseudotuberculosis serotype I (strain IP32953).